A 2241-amino-acid chain; its full sequence is Large tegument protein deneddylase (2241 aa).

A deubiquitination activity region spans residues 1-238 (MKVTQASCHQ…IDLTGVVRES (238 aa)). Residues 4–226 (TQASCHQGDI…AARLVSTYRD (223 aa)) form the Peptidase C76 domain. Catalysis depends on residues cysteine 24, aspartate 160, and histidine 162. The tract at residues 239–314 (ADTAATTTTA…STTSKTLATA (76 aa)) is disordered. The span at 240–250 (DTAATTTTAAP) shows a compositional bias: low complexity. The span at 251–268 (SLPPLPDPIVDPGCPPGV) shows a compositional bias: pro residues. Residues 304-314 (PSTTSKTLATA) show a composition bias toward low complexity. Residues 327-331 (SSAVP) form an interaction with inner tegument protein region. 2 disordered regions span residues 1187–1230 (MTET…PPAD) and 2118–2152 (PIAR…DTSR). Composition is skewed to basic and acidic residues over residues 1190-1199 (TSERLDRSLR) and 2142-2152 (QIDHAQDDTSR).

It belongs to the herpesviridae large tegument protein family. Interacts with host CUL1 and CUL4A; these interactions inhibit the E3 ligase activity of cullins. Interacts with inner tegument protein. Interacts with capsid vertex specific component CVC2. Interacts with the major capsid protein/MCP.

The protein localises to the virion tegument. The protein resides in the host cytoplasm. Its subcellular location is the host nucleus. It catalyses the reaction Thiol-dependent hydrolysis of ester, thioester, amide, peptide and isopeptide bonds formed by the C-terminal Gly of ubiquitin (a 76-residue protein attached to proteins as an intracellular targeting signal).. Its function is as follows. Large tegument protein that plays multiple roles in the viral cycle. During viral entry, remains associated with the capsid while most of the tegument is detached and participates in the capsid transport toward the host nucleus. Plays a role in the routing of the capsid at the nuclear pore complex and subsequent uncoating. Within the host nucleus, acts as a deneddylase and promotes the degradation of nuclear CRLs (cullin-RING ubiquitin ligases) and thereby stabilizes nuclear CRL substrates, while cytoplasmic CRLs remain unaffected. These modifications prevent host cell cycle S-phase progression and create a favorable environment allowing efficient viral genome replication. Participates later in the secondary envelopment of capsids. Indeed, plays a linker role for the association of the outer viral tegument to the capsids together with the inner tegument protein. The polypeptide is Large tegument protein deneddylase (UL48) (Homo sapiens (Human)).